The following is a 729-amino-acid chain: Fatty acid oxidation complex subunit alpha (729 aa).

Positions 1–189 are enoyl-CoA hydratase/isomerase; that stretch reads MLYKGDTLYL…KIGLVDGVVK (189 aa). A substrate-binding site is contributed by Asp296. The 3-hydroxyacyl-CoA dehydrogenase stretch occupies residues 311–729; it reads ETPKQAAVLG…ARPVGDLKTA (419 aa). NAD(+) is bound by residues Met324, Asp343, 400–402, Lys407, and Ser429; that span reads VVE. The active-site For 3-hydroxyacyl-CoA dehydrogenase activity is the His450. Asn453 is a binding site for NAD(+). Substrate is bound by residues Asn500 and Tyr660. Residues 708-729 form a disordered region; that stretch reads RHNEPYYPPVEPARPVGDLKTA.

It in the N-terminal section; belongs to the enoyl-CoA hydratase/isomerase family. This sequence in the C-terminal section; belongs to the 3-hydroxyacyl-CoA dehydrogenase family. As to quaternary structure, heterotetramer of two alpha chains (FadB) and two beta chains (FadA).

It carries out the reaction a (3S)-3-hydroxyacyl-CoA + NAD(+) = a 3-oxoacyl-CoA + NADH + H(+). The enzyme catalyses a (3S)-3-hydroxyacyl-CoA = a (2E)-enoyl-CoA + H2O. It catalyses the reaction a 4-saturated-(3S)-3-hydroxyacyl-CoA = a (3E)-enoyl-CoA + H2O. The catalysed reaction is (3S)-3-hydroxybutanoyl-CoA = (3R)-3-hydroxybutanoyl-CoA. It carries out the reaction a (3Z)-enoyl-CoA = a 4-saturated (2E)-enoyl-CoA. The enzyme catalyses a (3E)-enoyl-CoA = a 4-saturated (2E)-enoyl-CoA. Its pathway is lipid metabolism; fatty acid beta-oxidation. Functionally, involved in the aerobic and anaerobic degradation of long-chain fatty acids via beta-oxidation cycle. Catalyzes the formation of 3-oxoacyl-CoA from enoyl-CoA via L-3-hydroxyacyl-CoA. It can also use D-3-hydroxyacyl-CoA and cis-3-enoyl-CoA as substrate. This Escherichia coli (strain K12 / MC4100 / BW2952) protein is Fatty acid oxidation complex subunit alpha.